The primary structure comprises 498 residues: ATP synthase subunit beta, chloroplastic (498 aa).

ATP is bound at residue 172-179; sequence GGAGVGKT.

This sequence belongs to the ATPase alpha/beta chains family. As to quaternary structure, F-type ATPases have 2 components, CF(1) - the catalytic core - and CF(0) - the membrane proton channel. CF(1) has five subunits: alpha(3), beta(3), gamma(1), delta(1), epsilon(1). CF(0) has four main subunits: a(1), b(1), b'(1) and c(9-12).

The protein resides in the plastid. It is found in the chloroplast thylakoid membrane. It catalyses the reaction ATP + H2O + 4 H(+)(in) = ADP + phosphate + 5 H(+)(out). Produces ATP from ADP in the presence of a proton gradient across the membrane. The catalytic sites are hosted primarily by the beta subunits. The chain is ATP synthase subunit beta, chloroplastic from Platanus occidentalis (Sycamore).